A 638-amino-acid polypeptide reads, in one-letter code: Trichohyalin-like protein 1 (638 aa).

Residues 49-84 enclose the EF-hand domain; that stretch reads HVFHAVERKLNLLNFDRDGTISFEEFVLAIFSLLNP. The disordered stretch occupies residues 134–638; that stretch reads SEMASSGQPS…ALEAESLEAQ (505 aa). Polar residues predominate over residues 166 to 179; it reads LPRNVSEPNDPENQ. Composition is skewed to basic and acidic residues over residues 221 to 246, 294 to 309, and 318 to 328; these read IPRE…QRPT, DDTK…KDAG, and EEPKADAKVAE. The span at 343 to 357 shows a compositional bias: polar residues; the sequence is DQSVQSRSRNVSETS. 6 stretches are compositionally biased toward basic and acidic residues: residues 358-372, 395-409, 419-435, 479-490, 526-548, and 622-631; these read SRGE…HERI, REND…KDPS, EIKE…HSEE, RIQDKPVRKEDH, AEPH…KQES, and AGRENRKALE.

The protein belongs to the S-100 family.

The sequence is that of Trichohyalin-like protein 1 (Tchhl1) from Mus musculus (Mouse).